We begin with the raw amino-acid sequence, 99 residues long: Malonate decarboxylase acyl carrier protein (99 aa).

Ser-25 is subject to O-(phosphoribosyl dephospho-coenzyme A)serine.

The protein belongs to the MdcC family. Covalently binds the prosthetic group of malonate decarboxylase.

It is found in the cytoplasm. Its function is as follows. Subunit of malonate decarboxylase, it is an acyl carrier protein to which acetyl and malonyl thioester residues are bound via a 2'-(5''-phosphoribosyl)-3'-dephospho-CoA prosthetic group and turn over during the catalytic mechanism. The polypeptide is Malonate decarboxylase acyl carrier protein (Pseudomonas savastanoi pv. phaseolicola (strain 1448A / Race 6) (Pseudomonas syringae pv. phaseolicola (strain 1448A / Race 6))).